The primary structure comprises 280 residues: tRNA (guanine-N(1)-)-methyltransferase (280 aa).

The interval D71–R94 is disordered. Over residues S74–Q84 the composition is skewed to polar residues. S-adenosyl-L-methionine contacts are provided by residues G146 and I170–L175.

Belongs to the RNA methyltransferase TrmD family. In terms of assembly, homodimer.

It is found in the cytoplasm. The catalysed reaction is guanosine(37) in tRNA + S-adenosyl-L-methionine = N(1)-methylguanosine(37) in tRNA + S-adenosyl-L-homocysteine + H(+). Functionally, specifically methylates guanosine-37 in various tRNAs. The protein is tRNA (guanine-N(1)-)-methyltransferase of Corynebacterium aurimucosum (strain ATCC 700975 / DSM 44827 / CIP 107346 / CN-1) (Corynebacterium nigricans).